Consider the following 1059-residue polypeptide: Protein cappuccino (1059 aa).

Composition is skewed to polar residues over residues 62 to 80 and 90 to 123; these read AAVTQTPPGVTSSTPNESG and ATTSSPSLETQSTVIISFKSSQTPVQSQTNSAAS. 2 disordered regions span residues 62 to 146 and 448 to 647; these read AAVT…GTPT and QTES…TAPP. A compositionally biased stretch (pro residues) spans 133–142; the sequence is LPLPPPPPGF. Residues 468–481 show a composition bias toward basic and acidic residues; that stretch reads SDNESAKEDGEKPH. The region spanning 480 to 560 is the FH1 domain; the sequence is PHAVAPPPPP…PPPPMSASPS (81 aa). Pro residues predominate over residues 483-541; that stretch reads VAPPPPPPPPPLHAFVAPPPPPPPPPPPPPPLANYGAPPPPPPPPPGSGSAPPPPPPAP. Residues 585–1032 enclose the FH2 domain; that stretch reads RKSAVNPPKP…KKSKQAQIES (448 aa). Residues 620–629 are compositionally biased toward polar residues; that stretch reads TDSTENSGSS. The important for interaction with spir stretch occupies residues 1049 to 1059; the sequence is KERMLMRRSKN.

The protein belongs to the formin homology family. Cappuccino subfamily. As to quaternary structure, interacts with wash. Interacts with spir.

The protein localises to the cytoplasm. It is found in the cytoskeleton. Its subcellular location is the cytosol. The protein resides in the membrane. It localises to the cytoplasmic vesicle membrane. Acts as an actin nucleation factor and promotes assembly of actin filaments together with spir. May play a role in intracellular vesicle transport along actin fibers, providing a novel link between actin cytoskeleton dynamics and intracellular transport. The polypeptide is Protein cappuccino (capu) (Drosophila melanogaster (Fruit fly)).